A 57-amino-acid polypeptide reads, in one-letter code: UPF0391 membrane protein AZOSEA39630 (57 aa).

2 consecutive transmembrane segments (helical) span residues 4–24 and 37–57; these read WAII…TGVA and IALA…VLVF.

Belongs to the UPF0391 family.

It localises to the cell membrane. This Aromatoleum aromaticum (strain DSM 19018 / LMG 30748 / EbN1) (Azoarcus sp. (strain EbN1)) protein is UPF0391 membrane protein AZOSEA39630.